Consider the following 911-residue polypeptide: MSHKKRVYPTAQLQYGQTNIYEQHGVPQDAGAPQGQPLQSDIPYMNAQPGVIPGQGAPMMMDNGAMPQQQMFTPAQQQLNQQIDQTTAAMGNMQFNPAANESNMYYQQPLPQQQQQQQQQQGPAKPPKPMNQLYPIDLLVAFPPPISDLSLPPPPILFPLDTIPVPSEDALAPSNYIRSTLNAVPKSNSLLKKTKLPFSLVITPYQHLHDDINPPPLNEDGTIVRCRRCRSYMNPFVHFNQDGRRWKCNICNLFNEVPSFLDRMPNDTMSNRYMRNELRYSVVEYLAPKEYSLRQPPPSTYTFIIDVSQNAMKNGLLGTTTRTLLDNLDSLPNHDGRTRISILCVDNGLHYFAIPSDDQEGQQVEMMDVCDLDDAFIPRPDSMVVNLVQCRNNIETLLTKIPQIFQNNIINKFALGPALQAAYNLTRNEGGKIIVVSATLPNIGVGQLKKRVEEANVGTPKESQQLLTCQDPFYKTFTIQCNKVQISIDMFLASEEYMDVATLANLGHFSGGQTHFYPGFSAQRITDATKFSMEFAKHLSMDTSNEVVMRARGSTGIRTTGFHGHFFNRSSDLCAFSIMNRDQSYVFDITLDENIAAEYCYVQVAILLSLNTSQRRIRVITLALPTTDSIAEVYASVDQLAVTAAFTQKAIDKAQDTSLEEARRFINQSVEDVLTTYKKELVVQNTGAGGMPLRLCANMKIFPLLMHALTKNLAFRPGRVPSDHRAAALNYMESVPLKYLLKCIYPTIYSLHDMPDEVGLPDENNEIILPEPINASYSSFETYGLYLIDNGIDLFLWMGGEALPQLVEDAFGVPNILEMPIGKQEVPVVPESPFNERIRNIINRLRNHDDVITYQSLYILRSASNSDPVQANAKELSSLRMWASTHLVEDKIMGSEGYRDFLQMMKNKTSK.

Residues 108-123 show a composition bias toward low complexity; that stretch reads QPLPQQQQQQQQQQGP. The disordered stretch occupies residues 108 to 130; the sequence is QPLPQQQQQQQQQQGPAKPPKPM. C226, C229, C248, and C251 together coordinate Zn(2+). The interval 226-251 is zinc finger-like; it reads CRRCRSYMNPFVHFNQDGRRWKCNIC.

It belongs to the SEC23/SEC24 family. SEC24 subfamily. In terms of assembly, the COPII coat is composed of at least 5 proteins: the SEC23/24 complex, the SEC13/31 complex, and the protein SAR1. Golgi apparatus membrane; Peripheral membrane protein; Cytoplasmic side.

It localises to the cytoplasm. The protein localises to the cytoplasmic vesicle. Its subcellular location is the COPII-coated vesicle membrane. The protein resides in the endoplasmic reticulum membrane. It is found in the golgi apparatus membrane. In terms of biological role, component of the coat protein complex II (COPII) which promotes the formation of transport vesicles from the endoplasmic reticulum (ER). The coat has two main functions, the physical deformation of the endoplasmic reticulum membrane into vesicles and the selection of cargo molecules. This Naumovozyma castellii (Yeast) protein is Protein transport protein SEC24-1 (SEC241).